We begin with the raw amino-acid sequence, 614 residues long: Vitamin B12 transporter BtuB (614 aa).

Positions 1–20 (MIKKASLLTACSVTAFSAWA) are cleaved as a signal peptide. A TonB box motif is present at residues 26–33 (DTLVVTAI). Positions 38-152 (PRSTVLAPTT…IGGVVNIITT (115 aa)) constitute a TBDR plug domain. Residues Leu83, Ser85, Asn92, and 110 to 111 (VS) contribute to the cyanocob(III)alamin site. In terms of domain architecture, TBDR beta-barrel spans 155 to 614 (EPGTEISAGW…EYTLSGSYTF (460 aa)). The next 3 membrane-spanning stretches (beta stranded) occupy residues 158–165 (TEISAGWG), 169–178 (YQNYDVSTQQ), and 184–195 (TRVTLLGDYAHT). 4 residues coordinate Ca(2+): Asp199, Gln211, Asp213, and Asp215. A run of 2 beta stranded transmembrane segments spans residues 217–227 (FLSKTLYGALE) and 232–248 (DAWSGFVRGYGYDNRTN). Positions 249 and 250 each coordinate Ca(2+). Ala251 serves as a coordination point for cyanocob(III)alamin. Asp261 is a binding site for Ca(2+). The next 14 beta stranded transmembrane spans lie at 263-277 (RKLYSQSWDAGLRYN), 279-296 (ELIKSQLITSYSHSKDYN), 309-325 (TLDEMKQYTVQWANNVI), 328-337 (HGSIGAGVDW), 353-369 (YDQRNTGIYLTGLQQVG), 371-381 (FTFEGAARSDD), 385-400 (FGRHGTWQTSAGWEFI), 403-417 (YRFIASYGTSYKAPN), 434-443 (KSKQWEGAFE), 449-458 (VNWRISGYRN), 473-490 (YYNEGKARIKGVEATANF), 494-509 (PLTHTVSYDYVDARNA), 517-529 (RRAKQQVKYQLDW), and 535-550 (DWGITYQYLGTRYDKD). Thr309 serves as a coordination point for cyanocob(III)alamin. Cyanocob(III)alamin is bound at residue Arg517. Position 551 (Tyr551) interacts with cyanocob(III)alamin. Transmembrane regions (beta stranded) follow at residues 558 to 572 (TVKMGGVSLWDLAVA), 585 to 596 (IANLFDKDYETV), and 602 to 614 (AGREYTLSGSYTF). A TonB C-terminal box motif is present at residues 597–614 (YGYQTAGREYTLSGSYTF).

Belongs to the TonB-dependent receptor family. BtuB (TC 1.B.14.3.1) subfamily.

The protein localises to the cell outer membrane. Its function is as follows. Involved in the active translocation of vitamin B12 (cyanocobalamin) across the outer membrane to the periplasmic space. It derives its energy for transport by interacting with the trans-periplasmic membrane protein TonB. This chain is Vitamin B12 transporter BtuB, found in Shigella flexneri serotype 5b (strain 8401).